A 961-amino-acid polypeptide reads, in one-letter code: MITEGFPPNLNALKGSSLLEKRVDSLRQLNTTTVNQLLGLPGMTSTFTAPQLLQLRIIAITASAVSLIAGCLGMFFLSKMDKRRKVFRHDLIAFLIICDFLKAFILMIYPMIILINNSVYATPAFFNTLGWFTAFAIEGADMAIMIFAIHFAILIFKPNWKWRNKRSGNMEGGLYKKRSYIWPITALVPAILASLAFINYNKLNDDSDTTIILDNNNYNFPDSPRQGGYKPWSAWCYLPPKPYWYKIVLSWGPRYFIIIFIFAVYLSIYIFITSESKRIKAQIGDFNHNVLEEEKEKKKLFGLGHWGKAKWYFRSYFKLPLLHLLRNLKNFFTISFIDPNEETDDSGSSNGTFNFGESSNEIPTLFRKTNTGSDENVSASGGVRLLDYNSAKPLDMSKYAMSEQPDLERNNPFDCENDITLNPSELVSKQKEHKVTFSVENEGLDTRKSSMLGHQTFSCQNSLESPLAMYDNKNDNSDITSNIKEKGGIINNNSNNDDDDNNNNNDNDNDNNNSNNNNNNNNNNNNNNNNNNNNNNNNNNNNNNSNNIKNNVDNNNTNPADNIPTLSNEAFTPSQQFSQERVNNNADRCENSSFTNVQQHFQAQTYKQMKKRRAQIQKNLRAIFIYPLSYIGIWLFPIIADALQYNHEIKHGPTMWVTYIDTCVRPLSCLVDVIVYLFKEKPWNYSWAKTESKYLIEKYILKGELGEKEILKFCHSNWGKRGWYYRGKWKKRKCWKYSTNPLKRILWFVERFFKQLFELKLHFSFYDNCDDFEYWENYYSAKDSNDNKRTESDETKTNSSDRSLPSNSLELQAMLNNITAEEVEVPLFWRIIHHIPMLGGIDLDELNRLLKIRYNNDHFSLPGLKFALNQNKSHDKHQDVSTNSMVKSSFFSSNIVTNDDENSIEEDKNLRYSDASASENYLVKPTIPGTTPDPIIEAQNDNDSSDSSGIDLIAFLRNGPL.

The Extracellular segment spans residues 1-56; that stretch reads MITEGFPPNLNALKGSSLLEKRVDSLRQLNTTTVNQLLGLPGMTSTFTAPQLLQLR. The helical transmembrane segment at 57-79 threads the bilayer; it reads IIAITASAVSLIAGCLGMFFLSK. Residues 80-91 lie on the Cytoplasmic side of the membrane; it reads MDKRRKVFRHDL. The chain crosses the membrane as a helical span at residues 92 to 114; that stretch reads IAFLIICDFLKAFILMIYPMIIL. Residues 115–133 are Extracellular-facing; the sequence is INNSVYATPAFFNTLGWFT. The helical transmembrane segment at 134 to 156 threads the bilayer; sequence AFAIEGADMAIMIFAIHFAILIF. The Cytoplasmic segment spans residues 157-178; the sequence is KPNWKWRNKRSGNMEGGLYKKR. The helical transmembrane segment at 179–198 threads the bilayer; sequence SYIWPITALVPAILASLAFI. The Extracellular portion of the chain corresponds to 199–250; that stretch reads NYNKLNDDSDTTIILDNNNYNFPDSPRQGGYKPWSAWCYLPPKPYWYKIVLS. Residues 251-273 traverse the membrane as a helical segment; that stretch reads WGPRYFIIIFIFAVYLSIYIFIT. Residues 274–619 lie on the Cytoplasmic side of the membrane; the sequence is SESKRIKAQI…KKRRAQIQKN (346 aa). Ser373 is modified (phosphoserine). The disordered stretch occupies residues 468 to 568; the sequence is AMYDNKNDNS…PADNIPTLSN (101 aa). Residues 502-558 show a composition bias toward low complexity; it reads NNNNDNDNDNNNSNNNNNNNNNNNNNNNNNNNNNNNNNNNNNNSNNIKNNVDNNNTN. A helical transmembrane segment spans residues 620-642; that stretch reads LRAIFIYPLSYIGIWLFPIIADA. Over 643-822 the chain is Extracellular; that stretch reads LQYNHEIKHG…AMLNNITAEE (180 aa). Residues 783 to 796 are compositionally biased toward basic and acidic residues; that stretch reads DSNDNKRTESDETK. Positions 783-805 are disordered; it reads DSNDNKRTESDETKTNSSDRSLP. Residues 823-843 traverse the membrane as a helical segment; it reads VEVPLFWRIIHHIPMLGGIDL. Residues 844-961 are Cytoplasmic-facing; the sequence is DELNRLLKIR…LIAFLRNGPL (118 aa). The residue at position 903 (Ser903) is a Phosphoserine.

Belongs to the G-protein coupled receptor GPR1/git3 family.

It is found in the cell membrane. In terms of biological role, seems to associate with GPA2 and act as G protein-coupled receptor that senses glucose and controls filamentous growth. It acts upstream of adenylate cyclase and is required for glucose activation of cAMP synthesis in concert with a glucose phosphorylation-dependent mechanism. The sequence is that of G protein-coupled receptor GPR1 (GPR1) from Saccharomyces cerevisiae (strain ATCC 204508 / S288c) (Baker's yeast).